Consider the following 157-residue polypeptide: Large ribosomal subunit protein eL29 (157 aa).

Basic residues predominate over residues 1 to 26 (MAKSKNHTTHNQSRKWHRNGIKKPRS). The interval 1–32 (MAKSKNHTTHNQSRKWHRNGIKKPRSQRYESL) is disordered. Residue K5 is modified to N6-methyllysine. S31 bears the Phosphoserine mark. K33 is modified (N6-acetyllysine). The segment at 121–157 (PKAKAKAKDQTKAQAAAPASIPAQAPKGAQATTKATE) is disordered. Over residues 132–147 (KAQAAAPASIPAQAPK) the composition is skewed to low complexity. A Phosphoserine modification is found at S140.

This sequence belongs to the eukaryotic ribosomal protein eL29 family. Component of the large ribosomal subunit.

It localises to the cytoplasm. Functionally, component of the large ribosomal subunit. The ribosome is a large ribonucleoprotein complex responsible for the synthesis of proteins in the cell. The polypeptide is Large ribosomal subunit protein eL29 (RPL29) (Macaca fascicularis (Crab-eating macaque)).